The chain runs to 763 residues: Phosphoglycerol transferase I (763 aa).

Transmembrane regions (helical) follow at residues 1–21 (MSELLSFALFLASVLIYAWKA), 26–46 (WWFAATLTVLGLFVVLNITLF), 77–97 (ILPGIGIVLGLTAVFGALGWI), and 108–128 (FGYSLLALLLALGSVDASPAF).

It belongs to the OpgB family.

Its subcellular location is the cell inner membrane. It carries out the reaction a phosphatidylglycerol + a membrane-derived-oligosaccharide D-glucose = a 1,2-diacyl-sn-glycerol + a membrane-derived-oligosaccharide 6-(glycerophospho)-D-glucose.. Its pathway is glycan metabolism; osmoregulated periplasmic glucan (OPG) biosynthesis. Its function is as follows. Transfers a phosphoglycerol residue from phosphatidylglycerol to the membrane-bound nascent glucan backbones. This Escherichia coli O17:K52:H18 (strain UMN026 / ExPEC) protein is Phosphoglycerol transferase I.